The sequence spans 867 residues: Alanine--tRNA ligase (867 aa).

4 residues coordinate Zn(2+): histidine 559, histidine 563, cysteine 661, and histidine 665.

This sequence belongs to the class-II aminoacyl-tRNA synthetase family. The cofactor is Zn(2+).

The protein localises to the cytoplasm. It carries out the reaction tRNA(Ala) + L-alanine + ATP = L-alanyl-tRNA(Ala) + AMP + diphosphate. In terms of biological role, catalyzes the attachment of alanine to tRNA(Ala) in a two-step reaction: alanine is first activated by ATP to form Ala-AMP and then transferred to the acceptor end of tRNA(Ala). Also edits incorrectly charged Ser-tRNA(Ala) and Gly-tRNA(Ala) via its editing domain. In Aquifex aeolicus (strain VF5), this protein is Alanine--tRNA ligase.